The following is a 319-amino-acid chain: MTGPEWAHTRGTKVGQSSRTPPKVAVLLGGPSVEREVSLSSGQACAAALRDEGYDVVEIDAGHDLGARLIDAGPDAVLNCLHGRWGEDGCVQGLLEWMGVPYSHSGVLASALAMDKQRSKDAFVAAGLPVVPSVIAKAADVRMGHVMQPPYVVKPNNEGSSVGVYLVHEAANGPPQLSEDMPQEVMVEAFAPGRELTTTVVGDRALTVTDIVTDGWYDYDAKYKPGGSHHVVPADIPADIFDLCMDYALRAHHALGCRGVSRTDFRWDETKGAAGLILLETNTQPGMTATSLTPEQAAVTGMTFGKLCAWMVEDASCDR.

Residues 1 to 23 form a disordered region; that stretch reads MTGPEWAHTRGTKVGQSSRTPPK. In terms of domain architecture, ATP-grasp spans 120 to 313; that stretch reads KDAFVAAGLP…FGKLCAWMVE (194 aa). 147–197 contributes to the ATP binding site; sequence MQPPYVVKPNNEGSSVGVYLVHEAANGPPQLSEDMPQEVMVEAFAPGRELT. The Mg(2+) site is built by Asp-264, Glu-280, and Asn-282.

This sequence belongs to the D-alanine--D-alanine ligase family. The cofactor is Mg(2+). Mn(2+) serves as cofactor.

Its subcellular location is the cytoplasm. The enzyme catalyses 2 D-alanine + ATP = D-alanyl-D-alanine + ADP + phosphate + H(+). It functions in the pathway cell wall biogenesis; peptidoglycan biosynthesis. Cell wall formation. This Roseobacter denitrificans (strain ATCC 33942 / OCh 114) (Erythrobacter sp. (strain OCh 114)) protein is D-alanine--D-alanine ligase.